Here is an 89-residue protein sequence, read N- to C-terminus: Exodeoxyribonuclease 7 small subunit (89 aa).

Belongs to the XseB family. As to quaternary structure, heterooligomer composed of large and small subunits.

The protein localises to the cytoplasm. It catalyses the reaction Exonucleolytic cleavage in either 5'- to 3'- or 3'- to 5'-direction to yield nucleoside 5'-phosphates.. Functionally, bidirectionally degrades single-stranded DNA into large acid-insoluble oligonucleotides, which are then degraded further into small acid-soluble oligonucleotides. This chain is Exodeoxyribonuclease 7 small subunit, found in Chlorobium phaeobacteroides (strain DSM 266 / SMG 266 / 2430).